Here is a 455-residue protein sequence, read N- to C-terminus: Homeobox protein 14 (455 aa).

Low complexity-rich tracts occupy residues 1–16 (MNHNNNNYDFDNKNNS), 24–39 (SSRSSSSRSSNRSSSG), 81–118 (TTTTTTTTTTTTTTTTTKNENISSSESENSSSRVESPN), 179–239 (ESPN…SPSF), and 263–294 (NNNNNNNNNYNNNNNNNNNNNNNNNNTNTNNN). Disordered regions lie at residues 1–53 (MNHN…SSIN), 67–121 (KQTK…NCNK), 178–239 (SESP…SPSF), and 258–296 (TLLSQNNNNNNNNNYNNNNNNNNNNNNNNNNTNTNNNGD). 2 DNA-binding regions (homeobox) span residues 310–369 (KSGQ…SKSG) and 372–431 (SYAK…NKLS). A disordered region spans residues 431 to 455 (SSKANQDNDNNNNNENNDDSYSDEG). Low complexity predominate over residues 435 to 445 (NQDNDNNNNNE). A compositionally biased stretch (acidic residues) spans 446 to 455 (NNDDSYSDEG).

It is found in the nucleus. Its function is as follows. Putative transcription factor. The sequence is that of Homeobox protein 14 (hbx14) from Dictyostelium discoideum (Social amoeba).